Consider the following 193-residue polypeptide: Ion-translocating oxidoreductase complex subunit A (193 aa).

A run of 6 helical transmembrane segments spans residues 5–25 (LLLF…FLGL), 47–67 (FVMT…LIPL), 72–92 (LRTM…EMVV), 102–122 (LLGI…VALL), 134–154 (ALYG…FAAI), and 171–191 (AIAL…SGLV).

Belongs to the NqrDE/RnfAE family. In terms of assembly, the complex is composed of six subunits: RsxA, RsxB, RsxC, RsxD, RsxE and RsxG.

It is found in the cell inner membrane. Part of a membrane-bound complex that couples electron transfer with translocation of ions across the membrane. Required to maintain the reduced state of SoxR. In Escherichia coli O45:K1 (strain S88 / ExPEC), this protein is Ion-translocating oxidoreductase complex subunit A.